The primary structure comprises 561 residues: DNA ligase B (561 aa).

Lys-125 functions as the N6-AMP-lysine intermediate in the catalytic mechanism.

Belongs to the NAD-dependent DNA ligase family. LigB subfamily.

It carries out the reaction NAD(+) + (deoxyribonucleotide)n-3'-hydroxyl + 5'-phospho-(deoxyribonucleotide)m = (deoxyribonucleotide)n+m + AMP + beta-nicotinamide D-nucleotide.. In terms of biological role, catalyzes the formation of phosphodiester linkages between 5'-phosphoryl and 3'-hydroxyl groups in double-stranded DNA using NAD as a coenzyme and as the energy source for the reaction. The sequence is that of DNA ligase B from Salmonella enteritidis PT4 (strain P125109).